A 356-amino-acid polypeptide reads, in one-letter code: tRNA N6-adenosine threonylcarbamoyltransferase (356 aa).

Fe cation is bound by residues H116 and H120. Substrate is bound by residues 139 to 143 (IVSGG), D174, G187, D191, and N281. D309 is a binding site for Fe cation.

The protein belongs to the KAE1 / TsaD family. The cofactor is Fe(2+).

The protein localises to the cytoplasm. It carries out the reaction L-threonylcarbamoyladenylate + adenosine(37) in tRNA = N(6)-L-threonylcarbamoyladenosine(37) in tRNA + AMP + H(+). In terms of biological role, required for the formation of a threonylcarbamoyl group on adenosine at position 37 (t(6)A37) in tRNAs that read codons beginning with adenine. Is involved in the transfer of the threonylcarbamoyl moiety of threonylcarbamoyl-AMP (TC-AMP) to the N6 group of A37, together with TsaE and TsaB. TsaD likely plays a direct catalytic role in this reaction. This chain is tRNA N6-adenosine threonylcarbamoyltransferase, found in Frankia alni (strain DSM 45986 / CECT 9034 / ACN14a).